The primary structure comprises 123 residues: Double-stranded DNA deaminase immunity protein (123 aa).

The toxic domain forms a 1:1 complex with the DddI immunity protein. This protein blocks the active site of the toxin.

Immunity protein component of a toxin-immunity protein module, which functions as a cellular contact-dependent growth inhibition (CDI) system. CDI modules allow bacteria to communicate with and inhibit the growth of closely related neighboring bacteria in a contact-dependent fashion. Bacteria that have this module inhibit or kill bacteria without it, giving them a growth advantage. Specifically inhibits the toxic activity of cognate toxin DddA (C-terminal 163 residue fragment) upon expression in E.coli. This is Double-stranded DNA deaminase immunity protein from Burkholderia cenocepacia (strain H111).